The sequence spans 152 residues: 3-hydroxyacyl-[acyl-carrier-protein] dehydratase FabZ (152 aa).

Residue histidine 58 is part of the active site.

The protein belongs to the thioester dehydratase family. FabZ subfamily.

Its subcellular location is the cytoplasm. The catalysed reaction is a (3R)-hydroxyacyl-[ACP] = a (2E)-enoyl-[ACP] + H2O. Functionally, involved in unsaturated fatty acids biosynthesis. Catalyzes the dehydration of short chain beta-hydroxyacyl-ACPs and long chain saturated and unsaturated beta-hydroxyacyl-ACPs. The chain is 3-hydroxyacyl-[acyl-carrier-protein] dehydratase FabZ from Prochlorococcus marinus (strain MIT 9515).